Consider the following 379-residue polypeptide: Putative acetyl-CoA C-acetyltransferase VraB (379 aa).

C86 serves as the catalytic Acyl-thioester intermediate. The active-site Proton acceptor is H338.

Belongs to the thiolase-like superfamily. Thiolase family.

This chain is Putative acetyl-CoA C-acetyltransferase VraB (vraB), found in Staphylococcus aureus (strain Mu3 / ATCC 700698).